The chain runs to 259 residues: Ribonuclease HII (259 aa).

The interval 1–26 (MLSTPPKLPSAHGPVHFPRRSGTGMN) is disordered. An RNase H type-2 domain is found at 55 to 243 (APVAGADEAG…VRAQQLVLFE (189 aa)). A divalent metal cation is bound by residues D61, E62, and D152.

This sequence belongs to the RNase HII family. Mn(2+) serves as cofactor. The cofactor is Mg(2+).

The protein localises to the cytoplasm. The enzyme catalyses Endonucleolytic cleavage to 5'-phosphomonoester.. Its function is as follows. Endonuclease that specifically degrades the RNA of RNA-DNA hybrids. In Azorhizobium caulinodans (strain ATCC 43989 / DSM 5975 / JCM 20966 / LMG 6465 / NBRC 14845 / NCIMB 13405 / ORS 571), this protein is Ribonuclease HII.